A 2111-amino-acid chain; its full sequence is Fatty acid synthase beta subunit aflB (2111 aa).

Positions 200 to 565 (IVTVFNGQGV…KAGTAARVIL (366 aa)) are acetyltransferase (AT) domain. An enoyl reductase (ER) domain region spans residues 618 to 863 (SRALGLPPVM…AIVDTPGVPD (246 aa)). Residues 1195–1688 (GTKPSWRKAL…SPGETLLVDI (494 aa)) are dehydratase (DH) domain. Positions 1606 to 1708 (EMPTSSDQYA…IVVATARSES (103 aa)) constitute a MaoC-like domain. A malonyl/palmitoyl transferase (MT/PT) domain region spans residues 1727-2091 (YLFTGQGSQK…FENVLAISES (365 aa)).

This sequence belongs to the fungal fatty acid synthetase subunit beta family. As to quaternary structure, [Alpha(6)beta(6)] hexamers of two multifunctional subunits (alpha and beta).

The enzyme catalyses acetyl-CoA + n malonyl-CoA + 2n NADPH + 4n H(+) = a long-chain-acyl-CoA + n CoA + n CO2 + 2n NADP(+).. It catalyses the reaction holo-[ACP] + acetyl-CoA = acetyl-[ACP] + CoA. It carries out the reaction holo-[ACP] + malonyl-CoA = malonyl-[ACP] + CoA. The catalysed reaction is a (3R)-hydroxyacyl-[ACP] = a (2E)-enoyl-[ACP] + H2O. The enzyme catalyses a 2,3-saturated acyl-[ACP] + NAD(+) = a (2E)-enoyl-[ACP] + NADH + H(+). It catalyses the reaction (9Z)-octadecenoyl-[ACP] + H2O = (9Z)-octadecenoate + holo-[ACP] + H(+). It participates in secondary metabolite biosynthesis. Functionally, fatty acid synthase beta subunit; part of the gene cluster that mediates the biosynthesis of aspercryptins, linear lipopeptides built from six amino acids including 2 highly unusual and nonproteogenic amino acids, 2-amino-octanoic acid (2aoa) and 2-amino-dodecanol (2adol). The core structure of aspercryptins is as follows: Ser/Ala-Thr-Ile/Val-2aoa-Asn-2adol. The first step of aspercryptin biosynthesis is the generation of the fatty acid precursors, octanoic and dodecanoic acids, by the FAS subunits atnF and atnM. The fatty acid precursors are likely transformed into the corresponding alpha-amino fatty acids in three steps. First, they are hydroxylated by the cytochrome P450 monooxygenase atnE, then oxidized to the corresponding alpha-keto acids by the NAD(P)-dependent oxidoreductase atnD, and finally converted to the alpha-amino fatty acids by the PLP-dependent aminotransferases atnH or atnJ. the alpha-amino fatty acids, 2-amino-octanoic and 2-amino-dodecanoic acids, are recognized, activated, and covalently tethered to the NRPS atnA by its fourth and sixth adenylation domains. The second module of atnA is the Thr module and contains an epimerase (E) domain responsible for the epimerization of Thr to D-allo-Thr. Additionally, despite atnA having only one epimerase domain, the first amino acid of aspercryptin A1 is D-Ser, suggesting that serine is either loaded directly as D-Ser on the first module or that the epimerase domain in the threonine module epimerizes both L-Ser and L-Thr. After condensation of the hexapeptide of aspercryptin, the C-terminal reductase (TE) domain might be involved in the reductive release and production of the aldehyde hexapeptide. Further reduction would generate aspercryptins. The variety of aspercryptins produced reflects the flexibility of the atnA NRPS, allowing incorporation of alanine instead of serine, valine for isoleucine, and a C10 fatty amino alcohol instead of the C12 version. AtnB seems to be involved in the selectivity for Ile versus Val by the third module. Moreover, type B, C and D aspercryptins have an additional N-terminal cichorine, acetyl and propionyl group respectively. The polypeptide is Fatty acid synthase beta subunit aflB (Emericella nidulans (strain FGSC A4 / ATCC 38163 / CBS 112.46 / NRRL 194 / M139) (Aspergillus nidulans)).